A 176-amino-acid chain; its full sequence is ADP-ribosylation factor-like protein 8d (176 aa).

GTP contacts are provided by residues 21-26 (NSGKTS), 40-43 (MIPT), 62-66 (DLGGQ), and 121-124 (NKID).

It belongs to the small GTPase superfamily. Arf family. Interacts with tubulin.

The protein resides in the late endosome membrane. It localises to the lysosome membrane. The protein localises to the cytoplasm. Its subcellular location is the cytoskeleton. It is found in the spindle. In terms of biological role, may play a role in lysosome motility. May play a role in chromosome segregation. In Arabidopsis thaliana (Mouse-ear cress), this protein is ADP-ribosylation factor-like protein 8d.